The following is a 91-amino-acid chain: Non-specific lipid-transfer protein 1 (91 aa).

Cystine bridges form between cysteine 4/cysteine 51, cysteine 14/cysteine 28, cysteine 29/cysteine 74, and cysteine 49/cysteine 88.

As to expression, expressed in seeds (at protein level).

Plant non-specific lipid-transfer proteins transfer phospholipids as well as galactolipids across membranes. May play a role in wax or cutin deposition in the cell walls of expanding epidermal cells and certain secretory tissues. Binds to both saturated and unsaturated lipids, with the highest binding efficiency for linoleic acid, followed by linolenic acid. The sequence is that of Non-specific lipid-transfer protein 1 from Foeniculum vulgare (Fennel).